A 215-amino-acid polypeptide reads, in one-letter code: Coat protein (215 aa).

The interval 1–34 (MATQNADVTDATDYKKPPAETEQKALTIQPRSNK) is disordered. Residues 12-23 (TDYKKPPAETEQ) are compositionally biased toward basic and acidic residues. The span at 24–34 (KALTIQPRSNK) shows a compositional bias: polar residues.

This sequence belongs to the potexvirus capsid protein family.

The protein localises to the virion. Functionally, required for genome encapsidation. Forms ribonucleoprotein complexes along with TGB1 helicase and viral RNA. This chain is Coat protein, found in Setaria italica (Foxtail millet).